Consider the following 417-residue polypeptide: Cobalamin binding intrinsic factor (417 aa).

An N-terminal signal peptide occupies residues 1 to 22 (MAWFSLHLLHLLWAAAGTSTWA). 3 disulfide bridges follow: cysteine 26-cysteine 246, cysteine 103-cysteine 288, and cysteine 143-cysteine 182. N-linked (GlcNAc...) asparagine glycosylation is present at asparagine 100. Aspartate 171 contacts cob(II)alamin. Serine 191 carries the phosphoserine modification. A glycan (N-linked (GlcNAc...) asparagine) is linked at asparagine 209. The cob(II)alamin site is built by aspartate 222 and glutamine 270. Residues asparagine 311 and asparagine 330 are each glycosylated (N-linked (GlcNAc...) asparagine). Residues 365–370 (SWGLVV) and 386–395 (WQFLSGKTPL) contribute to the cob(II)alamin site. Asparagine 413 carries N-linked (GlcNAc...) asparagine glycosylation.

The protein belongs to the eukaryotic cobalamin transport proteins family. As to quaternary structure, interacts with CUBN (via CUB domains).

Its subcellular location is the secreted. Its function is as follows. Promotes absorption of the essential vitamin cobalamin (Cbl) in the ileum. After interaction with CUBN, the CBLIF-cobalamin complex is internalized via receptor-mediated endocytosis. The chain is Cobalamin binding intrinsic factor (CBLIF) from Canis lupus familiaris (Dog).